The primary structure comprises 142 residues: Hemoglobin cathodic subunit alpha (142 aa).

S1 bears the N-acetylserine mark. One can recognise a Globin domain in the interval 1–142; it reads SLTAKDKALV…LSSTAADKYR (142 aa). H59 contributes to the O2 binding site. H88 contributes to the heme b binding site.

The protein belongs to the globin family. In terms of assembly, heterotetramer of two alpha chains and two beta chains.

In terms of biological role, involved in oxygen transport from gills to the various peripheral tissues. In Hoplosternum littorale (Hassar), this protein is Hemoglobin cathodic subunit alpha.